Reading from the N-terminus, the 356-residue chain is Glutamine synthetase cytosolic isozyme 2 (356 aa).

The region spanning 19-99 is the GS beta-grasp domain; sequence IIAEYIWIGG…VMCDTYTPAG (81 aa). The region spanning 106–356 is the GS catalytic domain; the sequence is KRHNAAKIFS…IAESTILWKP (251 aa).

It belongs to the glutamine synthetase family. In terms of assembly, homooctamer.

The protein resides in the cytoplasm. It carries out the reaction L-glutamate + NH4(+) + ATP = L-glutamine + ADP + phosphate + H(+). This is Glutamine synthetase cytosolic isozyme 2 (GS1-2) from Vitis vinifera (Grape).